Here is a 115-residue protein sequence, read N- to C-terminus: Pycsar effector protein TpPycTM (115 aa).

2 consecutive transmembrane segments (helical) span residues 44-64 (IGNL…YATN) and 74-94 (VWNI…VILV).

The protein resides in the cell inner membrane. Functionally, pycsar (pyrimidine cyclase system for antiphage resistance) provides immunity against bacteriophage. The pyrimidine cyclase (PycC) synthesizes cyclic nucleotides in response to infection; these serve as specific second messenger signals. The signals activate the adjacent effector, leading to bacterial cell death and abortive phage infection. A clade C Pycsar system. Its function is as follows. The effector gene of a two-gene Pycsar system. Expression of this and adjacent uridylate cyclase TpPycC (AC A0A1T4LJ54) probably confers resistance to bacteriophage. The genes are probably only expressed in response to bacteriophage infection. Probably only responds to cUMP (produced by its cognate NTP cyclase), acts by impairing membrane integrity. The polypeptide is Pycsar effector protein TpPycTM (Treponema porcinum).